Here is a 534-residue protein sequence, read N- to C-terminus: Nuclear polyadenylated RNA-binding protein 4 (534 aa).

A disordered region spans residues methionine 1–leucine 154. Phosphoserine is present on residues serine 2 and serine 3. The segment covering glycine 13–asparagine 30 has biased composition (basic and acidic residues). The span at serine 37–aspartate 78 shows a compositional bias: low complexity. 2 positions are modified to phosphoserine: serine 51 and serine 87. Positions alanine 81 to glutamate 98 are enriched in basic and acidic residues. 2 stretches are compositionally biased toward low complexity: residues serine 99–alanine 112 and glutamine 121–glutamine 144. Over residues threonine 145–leucine 154 the composition is skewed to basic and acidic residues. RRM domains follow at residues cysteine 159–lysine 241 and glycine 243–proline 320. Serine 206 is modified (phosphoserine). Disordered stretches follow at residues lysine 316 to glutamine 354 and methionine 415 to arginine 534. Over residues glycine 336–glutamine 354 the composition is skewed to low complexity. Residues methionine 420–aspartate 459 are compositionally biased toward polar residues. Position 458 is a phosphothreonine (threonine 458). Phosphoserine occurs at positions 460 and 462. A compositionally biased stretch (low complexity) spans serine 460–serine 475. Over residues asparagine 478–histidine 505 the composition is skewed to basic and acidic residues. Omega-N-methylarginine is present on arginine 519. The span at asparagine 523–arginine 534 shows a compositional bias: low complexity.

In terms of assembly, interacts with NAM7. In terms of processing, methylated by HMT1. The methylation is required for nuclear export.

It localises to the cytoplasm. Its subcellular location is the nucleus. The protein resides in the stress granule. RNA-binding protein, which is involved in the polyadenylation-dependent pre-mRNA 3'-end formation and cooperates with the cleavage factor CFIA complex and the cleavage and polyadenylation factor (CPF) complex. May be involved in regulation of poly(A) site selection. Is involved in nonsense-mediated mRNA decay. Seems to bind to an RNA downstream sequence element (DSE) located 3' of a nonsense codon and may mark the transcript for decay. The protein is Nuclear polyadenylated RNA-binding protein 4 of Saccharomyces cerevisiae (strain ATCC 204508 / S288c) (Baker's yeast).